Reading from the N-terminus, the 154-residue chain is Small ribosomal subunit protein uS15 (154 aa).

Residues 1 to 14 (MAPVPHRSRHKKGR) are compositionally biased toward basic residues. Positions 1–24 (MAPVPHRSRHKKGRSGSVRPAHPT) are disordered.

This sequence belongs to the universal ribosomal protein uS15 family. Part of the 30S ribosomal subunit.

This chain is Small ribosomal subunit protein uS15, found in Pyrobaculum arsenaticum (strain DSM 13514 / JCM 11321 / PZ6).